Consider the following 439-residue polypeptide: Histidinol dehydrogenase (439 aa).

The NAD(+) site is built by Y125, Q187, and N210. The substrate site is built by T233, Q255, and H258. Zn(2+) contacts are provided by Q255 and H258. Catalysis depends on proton acceptor residues E323 and H324. 4 residues coordinate substrate: H324, D357, E411, and H416. Position 357 (D357) interacts with Zn(2+). Zn(2+) is bound at residue H416.

This sequence belongs to the histidinol dehydrogenase family. Requires Zn(2+) as cofactor.

The enzyme catalyses L-histidinol + 2 NAD(+) + H2O = L-histidine + 2 NADH + 3 H(+). It functions in the pathway amino-acid biosynthesis; L-histidine biosynthesis; L-histidine from 5-phospho-alpha-D-ribose 1-diphosphate: step 9/9. Its function is as follows. Catalyzes the sequential NAD-dependent oxidations of L-histidinol to L-histidinaldehyde and then to L-histidine. The protein is Histidinol dehydrogenase of Symbiobacterium thermophilum (strain DSM 24528 / JCM 14929 / IAM 14863 / T).